We begin with the raw amino-acid sequence, 284 residues long: Polyamine aminopropyltransferase (284 aa).

Positions 2 to 237 constitute a PABS domain; the sequence is ELWYTEEQTQ…GYWLFGFASK (236 aa). Gln31 is an S-methyl-5'-thioadenosine binding site. His62 and Asp86 together coordinate spermidine. Residues Glu106 and 137–138 each bind S-methyl-5'-thioadenosine; that span reads DG. Asp155 serves as the catalytic Proton acceptor. 155-158 contacts spermidine; sequence DSTD. Residue Pro162 participates in S-methyl-5'-thioadenosine binding.

It belongs to the spermidine/spermine synthase family. As to quaternary structure, homodimer or homotetramer.

Its subcellular location is the cytoplasm. The catalysed reaction is S-adenosyl 3-(methylsulfanyl)propylamine + putrescine = S-methyl-5'-thioadenosine + spermidine + H(+). Its pathway is amine and polyamine biosynthesis; spermidine biosynthesis; spermidine from putrescine: step 1/1. In terms of biological role, catalyzes the irreversible transfer of a propylamine group from the amino donor S-adenosylmethioninamine (decarboxy-AdoMet) to putrescine (1,4-diaminobutane) to yield spermidine. This Alkaliphilus metalliredigens (strain QYMF) protein is Polyamine aminopropyltransferase.